The chain runs to 488 residues: GTPase Der (488 aa).

2 consecutive EngA-type G domains span residues 3-166 (PVVA…VSDG) and 201-374 (IKLA…QCAT). GTP-binding positions include 9-16 (GRPNVGKS), 56-60 (DTGGI), 118-121 (NKTD), 207-214 (GRPNVGKS), 254-258 (DTAGV), and 319-322 (NKWD). One can recognise a KH-like domain in the interval 375 to 459 (KRVSTALLTR…PIRIQFNEGA (85 aa)).

This sequence belongs to the TRAFAC class TrmE-Era-EngA-EngB-Septin-like GTPase superfamily. EngA (Der) GTPase family. As to quaternary structure, associates with the 50S ribosomal subunit.

Its function is as follows. GTPase that plays an essential role in the late steps of ribosome biogenesis. This Sodalis glossinidius (strain morsitans) protein is GTPase Der.